Consider the following 403-residue polypeptide: Betaine--homocysteine S-methyltransferase 1 (403 aa).

The Hcy-binding domain maps to 8-311 (KGLLERLDAG…YHTRAIAEEL (304 aa)). 3 residues coordinate Zn(2+): cysteine 214, cysteine 296, and cysteine 297.

As to quaternary structure, homotetramer. Zn(2+) serves as cofactor.

The protein localises to the cytoplasm. The enzyme catalyses L-homocysteine + glycine betaine = N,N-dimethylglycine + L-methionine. Its pathway is amine and polyamine degradation; betaine degradation; sarcosine from betaine: step 1/2. It functions in the pathway amino-acid biosynthesis; L-methionine biosynthesis via de novo pathway; L-methionine from L-homocysteine (BhmT route): step 1/1. Functionally, involved in the regulation of homocysteine metabolism. Converts betaine and homocysteine to dimethylglycine and methionine, respectively. This reaction is also required for the irreversible oxidation of choline. The polypeptide is Betaine--homocysteine S-methyltransferase 1 (bhmt) (Xenopus laevis (African clawed frog)).